The sequence spans 1240 residues: DNA polymerase catalytic subunit (1240 aa).

Residues 1–22 (MFCAAGGPASPGGKPAARAASG) are compositionally biased toward low complexity. Disordered regions lie at residues 1 to 44 (MFCA…RRQN), 646 to 695 (GLDK…RETG), and 1103 to 1139 (AAAP…ASKP). Positions 669 to 688 (NGDEDKDDDEDGDEDGDERE) are enriched in acidic residues.

It belongs to the DNA polymerase type-B family. Forms a complex with the ssDNA-binding protein UL29, the DNA polymerase processivity factor, and the alkaline exonuclease. Interacts with the putative helicase-primase complex subunit UL8; this interaction may coordinate leading and lagging strand DNA synthesis at the replication fork.

It localises to the host nucleus. It carries out the reaction DNA(n) + a 2'-deoxyribonucleoside 5'-triphosphate = DNA(n+1) + diphosphate. The catalysed reaction is Endonucleolytic cleavage to 5'-phosphomonoester.. Replicates viral genomic DNA. The replication complex is composed of six viral proteins: the DNA polymerase, processivity factor, primase, primase-associated factor, helicase, and ssDNA-binding protein. Additionally, the polymerase contains an intrinsic ribonuclease H (RNase H) activity that specifically degrades RNA/DNA heteroduplexes or duplex DNA substrates in the 5' to 3' direction. Therefore, it can catalyze the excision of the RNA primers that initiate the synthesis of Okazaki fragments at a replication fork during viral DNA replication. The protein is DNA polymerase catalytic subunit of Human herpesvirus 2 (strain HG52) (HHV-2).